A 32-amino-acid chain; its full sequence is Calcitonin-2 (32 aa).

Cysteine 1 and cysteine 7 form a disulfide bridge. Proline 32 bears the Proline amide mark.

It belongs to the calcitonin family.

It is found in the secreted. Functionally, causes a rapid but short-lived drop in the level of calcium and phosphate in blood by promoting the incorporation of those ions in the bones. The sequence is that of Calcitonin-2 from Oncorhynchus gorbuscha (Pink salmon).